We begin with the raw amino-acid sequence, 246 residues long: 1-(5-phosphoribosyl)-5-[(5-phosphoribosylamino)methylideneamino] imidazole-4-carboxamide isomerase (246 aa).

Residue aspartate 8 is the Proton acceptor of the active site. Aspartate 130 acts as the Proton donor in catalysis.

This sequence belongs to the HisA/HisF family.

The protein localises to the cytoplasm. It catalyses the reaction 1-(5-phospho-beta-D-ribosyl)-5-[(5-phospho-beta-D-ribosylamino)methylideneamino]imidazole-4-carboxamide = 5-[(5-phospho-1-deoxy-D-ribulos-1-ylimino)methylamino]-1-(5-phospho-beta-D-ribosyl)imidazole-4-carboxamide. The protein operates within amino-acid biosynthesis; L-histidine biosynthesis; L-histidine from 5-phospho-alpha-D-ribose 1-diphosphate: step 4/9. The chain is 1-(5-phosphoribosyl)-5-[(5-phosphoribosylamino)methylideneamino] imidazole-4-carboxamide isomerase from Alcanivorax borkumensis (strain ATCC 700651 / DSM 11573 / NCIMB 13689 / SK2).